The primary structure comprises 327 residues: Malate dehydrogenase (327 aa).

Residue 11–17 (GAAGQIA) coordinates NAD(+). The substrate site is built by R92 and R98. NAD(+)-binding positions include N105, Q112, and 128 to 130 (VGN). Substrate is bound by residues N130 and R160. H185 acts as the Proton acceptor in catalysis.

It belongs to the LDH/MDH superfamily. MDH type 2 family.

It carries out the reaction (S)-malate + NAD(+) = oxaloacetate + NADH + H(+). Its function is as follows. Catalyzes the reversible oxidation of malate to oxaloacetate. In Magnetococcus marinus (strain ATCC BAA-1437 / JCM 17883 / MC-1), this protein is Malate dehydrogenase.